A 157-amino-acid chain; its full sequence is MASKCVRLLLLLSWVAGPEVLSDILRPSCASGWFNYRSHCYGYFRKLRNWSHAELECQSYGNGSHLASVLNPKEASVISKYITGYQRSLPVWIGLHDPQKNASWQWIDGSTNQYRPWSPRTKSEARHCTEMNPKDKFLTWNKNGCTKRQHFLCKYRP.

Positions 1–22 (MASKCVRLLLLLSWVAGPEVLS) are cleaved as a signal peptide. Residues Cys-29 and Cys-40 are joined by a disulfide bond. Residues 36–154 (YRSHCYGYFR…CTKRQHFLCK (119 aa)) form the C-type lectin domain. Residues Asn-49, Asn-62, and Asn-101 are each glycosylated (N-linked (GlcNAc...) asparagine). 2 cysteine pairs are disulfide-bonded: Cys-57/Cys-153 and Cys-128/Cys-145. Residues 97 to 101 (DPQKN) and 134 to 136 (KDK) contribute to the a carbohydrate site.

It localises to the secreted. Its function is as follows. Calcium-independent lectin displaying mannose-binding specificity and able to maintain carbohydrate recognition activity in an acidic environment. May be involved in inflammatory and metaplastic responses of the gastrointestinal epithelium. This chain is Regenerating islet-derived protein 4 (Reg4), found in Rattus norvegicus (Rat).